Consider the following 477-residue polypeptide: Glycogen synthase (477 aa).

An ADP-alpha-D-glucose-binding site is contributed by Lys-15.

This sequence belongs to the glycosyltransferase 1 family. Bacterial/plant glycogen synthase subfamily.

It carries out the reaction [(1-&gt;4)-alpha-D-glucosyl](n) + ADP-alpha-D-glucose = [(1-&gt;4)-alpha-D-glucosyl](n+1) + ADP + H(+). It participates in glycan biosynthesis; glycogen biosynthesis. In terms of biological role, synthesizes alpha-1,4-glucan chains using ADP-glucose. The protein is Glycogen synthase of Salmonella choleraesuis (strain SC-B67).